The primary structure comprises 134 residues: MMACRTLCLVVVMVASLGTSGVGGRSVEGASRMEKLLSSSNSPSSTPLGFLSQDHSVNKRQVFDQACKGVYDRNLFKKLDRVCEDCYNLYRKPFVATTCRENCYSNWVFRQCLDDLLLSDVIDEYVSNVQMVGK.

A signal peptide spans M1–G24. A Pyrrolidone carboxylic acid modification is found at Q61. F63 bears the D-phenylalanine; in form CHH-A-II mark. Intrachain disulfides connect C67/C103, C83/C99, and C86/C112. The residue at position 132 (V132) is a Valine amide.

Belongs to the arthropod CHH/MIH/GIH/VIH hormone family. Stereoinversion of L-Phe (form CHH-A-I) to D-Phe (form CHH-A-II). As to expression, produced by the medulla terminalis X-organ in the eyestalks and transported to the sinus gland where they are stored and released. Present also in the ventral nervous system.

The protein resides in the secreted. In terms of biological role, CHH is the most abundant hormone in the sinus gland of isopods and decapods which controls the blood sugar level. Has a secretagogue action over the amylase released from the midgut gland. May act as a stress hormone. MIH may inhibit Y-organs where molting hormone (ecdysteroid) is secreted and a molting cycle is initiated when MIH secretion diminishes or stops. This Homarus americanus (American lobster) protein is Crustacean hyperglycemic hormones isoform A.